Reading from the N-terminus, the 973-residue chain is Peptidyl-glycine alpha-amidating monooxygenase (973 aa).

The first 20 residues, 1–20 (MAGRVPSLLVLLVFPSSCLA), serve as a signal peptide directing secretion. The interval 1–494 (MAGRVPSLLV…EGTWEPEHTG (494 aa)) is peptidylglycine alpha-hydroxylating monooxygenase. Positions 21-30 (FRSPLSVFKR) are excised as a propeptide. Topologically, residues 31 to 863 (FKETTRPFSN…QKLIKEPGSG (833 aa)) are intragranular. Cystine bridges form between cysteine 42–cysteine 181, cysteine 76–cysteine 121, cysteine 109–cysteine 126, cysteine 222–cysteine 329, and cysteine 288–cysteine 310. Cu(2+)-binding residues include histidine 102 and histidine 103. Cu(2+) contacts are provided by histidine 167, histidine 237, histidine 239, and methionine 309. Residues 495-817 (DFHMEEALDW…LTEKLEHRSV (323 aa)) form a peptidyl-alpha-hydroxyglycine alpha-amidating lyase region. 4 NHL repeats span residues 498 to 541 (MEEA…NSFD), 567 to 608 (AAVL…LDPN), 617 to 662 (LGRS…FSPS), and 670 to 714 (GEES…FKTD). Valine 517 contacts Ca(2+). Arginine 530 contacts a protein. Histidine 582 serves as a coordination point for Zn(2+). Leucine 584 is a binding site for Ca(2+). Cysteine 631 and cysteine 652 are joined by a disulfide. Tyrosine 651 is a binding site for a protein. Histidine 687 lines the Zn(2+) pocket. Residues cysteine 699 and cysteine 710 are joined by a disulfide bond. Arginine 703 lines the a protein pocket. Residue asparagine 762 is glycosylated (N-linked (GlcNAc...) asparagine). Residues 766-809 (GEIIDIFKPVRKHFDMPHDIVASEDGTVYIGDAHTNTVWKFTLT) form an NHL 5 repeat. Residue histidine 783 participates in Zn(2+) binding. Aspartate 784 lines the Ca(2+) pocket. The helical transmembrane segment at 864 to 887 (VPVVLITTLLVIPVVVLLAIAIFI) threads the bilayer. Sulfotyrosine is present on residues isoleucine 875 and arginine 893. Topologically, residues 888–973 (RWKKSRAFGD…PLPALAPSSS (86 aa)) are cytoplasmic. Phosphoserine is present on residues serine 918, serine 929, and serine 942. Residues 925 to 942 (NFFASRKGYSRKGFDRLS) are interaction with RASSF9. A disordered region spans residues 937–973 (GFDRLSTEGSDQEKEDDGSESEEEYSAPLPALAPSSS). Threonine 943 carries the post-translational modification Phosphothreonine. A Phosphoserine; by UHMK1; in vitro modification is found at serine 946. Acidic residues predominate over residues 949–961 (EKEDDGSESEEEY). At serine 957 the chain carries Phosphoserine. A compositionally biased stretch (low complexity) spans 962 to 973 (SAPLPALAPSSS).

This sequence in the C-terminal section; belongs to the peptidyl-alpha-hydroxyglycine alpha-amidating lyase family. The protein in the N-terminal section; belongs to the copper type II ascorbate-dependent monooxygenase family. In terms of assembly, monomer. Interacts with RASSF9. It depends on Zn(2+) as a cofactor. Requires Cu(2+) as cofactor.

Its subcellular location is the cytoplasmic vesicle. It localises to the secretory vesicle membrane. It is found in the membrane. The protein resides in the secreted. The catalysed reaction is a [peptide]-C-terminal glycine + 2 L-ascorbate + O2 = a [peptide]-C-terminal (2S)-2-hydroxyglycine + 2 monodehydro-L-ascorbate radical + H2O. It carries out the reaction a [peptide]-C-terminal (2S)-2-hydroxyglycine = a [peptide]-C-terminal amide + glyoxylate. It catalyses the reaction N-dodecanoylglycine + 2 L-ascorbate + O2 = N-dodecanoyl-(2S)-hydroxyglycine + 2 monodehydro-L-ascorbate radical + H2O. The enzyme catalyses N-dodecanoyl-(2S)-hydroxyglycine = dodecanamide + glyoxylate. The catalysed reaction is N-(9Z,12Z,15Z)-octadecatrienoylglycine + 2 L-ascorbate + O2 = N-(9Z,12Z,15Z)-octadecatrienoyl-(2S)-hydroxyglycine + 2 monodehydro-L-ascorbate radical + H2O. It carries out the reaction N-(9Z,12Z,15Z)-octadecatrienoyl-(2S)-hydroxyglycine = (9Z,12Z,15Z)-octadecatrienamide + glyoxylate. It catalyses the reaction N-(9Z-octadecenoyl)glycine + 2 L-ascorbate + O2 = N-(9Z-octadecenoyl)-(2S)-hydroxyglycine + 2 monodehydro-L-ascorbate radical + H2O. The enzyme catalyses N-(9Z-octadecenoyl)-(2S)-hydroxyglycine = (9Z)-octadecenamide + glyoxylate. The catalysed reaction is N-tetradecanoylglycine + 2 L-ascorbate + O2 = N-tetradecanoyl-(2S)-hydroxyglycine + 2 monodehydro-L-ascorbate radical + H2O. It carries out the reaction N-tetradecanoyl-(2S)-hydroxyglycine = tetradecamide + glyoxylate. It catalyses the reaction N-decanoylglycine + 2 L-ascorbate + O2 = N-decanoyl-(2S)-hydroxyglycine + 2 monodehydro-L-ascorbate radical + H2O. The enzyme catalyses N-decanoyl-(2S)-hydroxyglycine = decanamide + glyoxylate. The catalysed reaction is N-octanoylglycine + 2 L-ascorbate + O2 = N-octanoyl-(2S)-hydroxyglycine + 2 monodehydro-L-ascorbate radical + H2O. It carries out the reaction N-octanoyl-(2S)-hydroxyglycine = octanamide + glyoxylate. PAM activity is inhibited by EDTA, phenylglyoxal and diethyl pyrocarbonate. PAL activity is stimulated by cadmium and inhibited by mercury. Its function is as follows. Bifunctional enzyme that catalyzes amidation of the C-terminus of proteins. Alpha-amidation is present at the C-terminus of many endocrine hormones and neuropeptides and is required for their activity. C-terminal amidation also takes place in response to protein fragmentation triggered by oxidative stress, promoting degradation of amidated protein fragments by the proteasome. Alpha-amidation involves two sequential reactions, both of which are catalyzed by separate catalytic domains of the enzyme. The first step, catalyzed by peptidyl alpha-hydroxylating monooxygenase (PHM) domain, is the copper-, ascorbate-, and O2- dependent stereospecific hydroxylation (with S stereochemistry) at the alpha-carbon (C-alpha) of the C-terminal glycine of the peptidylglycine substrate. The second step, catalyzed by the peptidylglycine amidoglycolate lyase (PAL) domain, is the zinc-dependent cleavage of the N-C-alpha bond, producing the alpha-amidated peptide and glyoxylate. Similarly, catalyzes the two-step conversion of an N-fatty acylglycine to a primary fatty acid amide and glyoxylate. The protein is Peptidyl-glycine alpha-amidating monooxygenase of Homo sapiens (Human).